A 574-amino-acid chain; its full sequence is 3-hydroxy-3-methylglutaryl-coenzyme A reductase 3 (574 aa).

The disordered stretch occupies residues 1-30 (MDVRRRPVKPLYPSEHISSGEPLKPHNQDS). Residues 41 to 61 (PLYLTNGLFFTMFFSVMYFLL) traverse the membrane as a helical segment. N-linked (GlcNAc...) asparagine glycosylation is present at N78. A helical membrane pass occupies residues 83-103 (VAMVSLIASVIYLLGFFGIGF). The segment at 104–161 (VQSFVSKGNNDSWDVEDESPEQFIDRTVTPPPVRRNIPMKSVPVAEKTAQIITPFSSE) is linker. The N-linked (GlcNAc...) asparagine glycan is linked to N113. The tract at residues 162–574 (DDEVVIKSVV…YNRSCKDVTK (413 aa)) is catalytic. E256 serves as the catalytic Charge relay system. Residue N320 is glycosylated (N-linked (GlcNAc...) asparagine). Residue K388 is the Charge relay system of the active site. N-linked (GlcNAc...) asparagine glycosylation occurs at N433. The Charge relay system role is filled by D464. The active-site Proton donor is H562. The N-linked (GlcNAc...) asparagine glycan is linked to N566.

This sequence belongs to the HMG-CoA reductase family. Expressed in mature petals and anthers.

The protein resides in the endoplasmic reticulum membrane. The enzyme catalyses (R)-mevalonate + 2 NADP(+) + CoA = (3S)-3-hydroxy-3-methylglutaryl-CoA + 2 NADPH + 2 H(+). The protein operates within metabolic intermediate biosynthesis; (R)-mevalonate biosynthesis; (R)-mevalonate from acetyl-CoA: step 3/3. Its function is as follows. Catalyzes the synthesis of mevalonate. The specific precursor of all isoprenoid compounds present in plants. The chain is 3-hydroxy-3-methylglutaryl-coenzyme A reductase 3 (HMG3) from Solanum tuberosum (Potato).